We begin with the raw amino-acid sequence, 26 residues long: Ribulose bisphosphate carboxylase large chain (26 aa).

The propeptide occupies 1-2; sequence MS. Proline 3 is modified (N-acetylproline).

It belongs to the RuBisCO large chain family. Type I subfamily. In terms of assembly, heterohexadecamer of 8 large chains and 8 small chains.

Its subcellular location is the plastid. The protein localises to the chloroplast. It carries out the reaction 2 (2R)-3-phosphoglycerate + 2 H(+) = D-ribulose 1,5-bisphosphate + CO2 + H2O. The enzyme catalyses D-ribulose 1,5-bisphosphate + O2 = 2-phosphoglycolate + (2R)-3-phosphoglycerate + 2 H(+). Its function is as follows. RuBisCO catalyzes two reactions: the carboxylation of D-ribulose 1,5-bisphosphate, the primary event in carbon dioxide fixation, as well as the oxidative fragmentation of the pentose substrate in the photorespiration process. Both reactions occur simultaneously and in competition at the same active site. The chain is Ribulose bisphosphate carboxylase large chain (rbcL) from Vicia faba (Broad bean).